Reading from the N-terminus, the 462-residue chain is Bifunctional protein GlmU (462 aa).

A pyrophosphorylase region spans residues 1–235 (MSYINFSAII…TFEIMGVNSK (235 aa)). UDP-N-acetyl-alpha-D-glucosamine is bound by residues 11 to 14 (LAAG), Lys-25, Gln-80, 85 to 86 (GT), 107 to 109 (YGD), Gly-144, Glu-159, and Asn-233. A Mg(2+)-binding site is contributed by Asp-109. Residue Asn-233 participates in Mg(2+) binding. The linker stretch occupies residues 236-256 (SDFVDLDKQYQQRKVQCLLSS). Residues 257 to 462 (GLMIIDPNRF…LNWKRLKNKK (206 aa)) are N-acetyltransferase. 2 residues coordinate UDP-N-acetyl-alpha-D-glucosamine: Arg-339 and Lys-357. The active-site Proton acceptor is His-369. UDP-N-acetyl-alpha-D-glucosamine-binding residues include Tyr-372 and Asn-383. Residues Ala-386, 392-393 (NY), Ala-429, and Arg-446 contribute to the acetyl-CoA site.

It in the N-terminal section; belongs to the N-acetylglucosamine-1-phosphate uridyltransferase family. In the C-terminal section; belongs to the transferase hexapeptide repeat family. As to quaternary structure, homotrimer. Mg(2+) serves as cofactor.

The protein localises to the cytoplasm. The enzyme catalyses alpha-D-glucosamine 1-phosphate + acetyl-CoA = N-acetyl-alpha-D-glucosamine 1-phosphate + CoA + H(+). The catalysed reaction is N-acetyl-alpha-D-glucosamine 1-phosphate + UTP + H(+) = UDP-N-acetyl-alpha-D-glucosamine + diphosphate. It participates in nucleotide-sugar biosynthesis; UDP-N-acetyl-alpha-D-glucosamine biosynthesis; N-acetyl-alpha-D-glucosamine 1-phosphate from alpha-D-glucosamine 6-phosphate (route II): step 2/2. The protein operates within nucleotide-sugar biosynthesis; UDP-N-acetyl-alpha-D-glucosamine biosynthesis; UDP-N-acetyl-alpha-D-glucosamine from N-acetyl-alpha-D-glucosamine 1-phosphate: step 1/1. It functions in the pathway bacterial outer membrane biogenesis; LPS lipid A biosynthesis. Its function is as follows. Catalyzes the last two sequential reactions in the de novo biosynthetic pathway for UDP-N-acetylglucosamine (UDP-GlcNAc). The C-terminal domain catalyzes the transfer of acetyl group from acetyl coenzyme A to glucosamine-1-phosphate (GlcN-1-P) to produce N-acetylglucosamine-1-phosphate (GlcNAc-1-P), which is converted into UDP-GlcNAc by the transfer of uridine 5-monophosphate (from uridine 5-triphosphate), a reaction catalyzed by the N-terminal domain. This is Bifunctional protein GlmU from Blochmanniella pennsylvanica (strain BPEN).